The following is a 554-amino-acid chain: Glutamine--tRNA ligase (554 aa).

The 'HIGH' region motif lies at 34–44 (PEPNGYLHIGH). ATP-binding positions include 35-37 (EPN) and 41-47 (HIGHAKS). L-glutamine contacts are provided by D67 and Y212. ATP is bound by residues T231, 261–262 (RL), and 269–271 (MSK). The short motif at 268 to 272 (IMSKR) is the 'KMSKS' region element.

The protein belongs to the class-I aminoacyl-tRNA synthetase family. As to quaternary structure, monomer.

Its subcellular location is the cytoplasm. It catalyses the reaction tRNA(Gln) + L-glutamine + ATP = L-glutaminyl-tRNA(Gln) + AMP + diphosphate. The polypeptide is Glutamine--tRNA ligase (Serratia proteamaculans (strain 568)).